Here is a 1105-residue protein sequence, read N- to C-terminus: KAT8 regulatory NSL complex subunit 1 (1105 aa).

At lysine 104 the chain carries N6-acetyllysine. 2 disordered regions span residues 145-211 and 225-263; these read GQTA…CTLP and NNST…GVKL. Over residues 225-258 the composition is skewed to polar residues; it reads NNSTANKSSVNSMEQPALQGSSRLSPGTDSSSNL. Phosphoserine is present on serine 249. Lysine 262 is covalently cross-linked (Glycyl lysine isopeptide (Lys-Gly) (interchain with G-Cter in SUMO2)). Phosphoserine is present on serine 268. The stretch at 283–314 forms a coiled coil; sequence RITALLRRQADIESRARRLQKRLQVVQAKQVE. Lysine 331 participates in a covalent cross-link: Glycyl lysine isopeptide (Lys-Gly) (interchain with G-Cter in SUMO2). 2 disordered regions span residues 399 to 426 and 733 to 857; these read DSDV…PEQR and TAKL…RRGE. Composition is skewed to basic and acidic residues over residues 741–753 and 780–804; these read TRPD…HLDD and DPNH…HHTD. Residues 827 to 850 show a composition bias toward low complexity; the sequence is STSSDSPAPASSSSQVTASTSQQP. The interval 850-882 is required for activation of KAT8 histone acetyltransferase activity; that stretch reads PVRRRRGESSFDINNIVIPMSVAATTRVEKLQY. In terms of domain architecture, PEHE spans 884 to 1035; that stretch reads EILTPSWREV…GLDEQSVQPW (152 aa). Residues 910–928 are interaction with KAT8 HAT domain; sequence EDLSDAAFAALHAKCEEME. Residues 938–1034 are disordered; sequence VPPQRRGSRS…LGLDEQSVQP (97 aa). Residues 955–965 are compositionally biased toward polar residues; it reads TTPQLGSANPS. Low complexity predominate over residues 975–988; the sequence is SSSHSLSEYSHGQS. Phosphoserine occurs at positions 991 and 994. At threonine 1003 the chain carries Phosphothreonine. Basic and acidic residues predominate over residues 1008–1019; the sequence is DTPRHLASEDTR. Phosphoserine is present on serine 1045. The tract at residues 1058–1105 is disordered; it reads ERAARCTRRTSGSKTGRETEAAPTSPPIVPLKSRHLVAAATAQRPTHR.

As to quaternary structure, component of the NSL complex at least composed of MOF/KAT8, KANSL1, KANSL2, KANSL3, MCRS1, PHF20, OGT1/OGT, WDR5 and HCFC1. Interacts (via PEHE domain) with KAT8 (via HAT domain); the interaction is direct. Component of some MLL1/MLL complex, at least composed of the core components KMT2A/MLL1, ASH2L, HCFC1, WDR5 and RBBP5, as well as the facultative components BACC1, CHD8, E2F6, HSP70, INO80C, KANSL1, LAS1L, MAX, MCRS1, MGA, KAT8/MOF, PELP1, PHF20, PRP31, RING2, RUVB1/TIP49A, RUVB2/TIP49B, SENP3, TAF1, TAF4, TAF6, TAF7, TAF9 and TEX10. Expressed in the brain.

It is found in the nucleus. The protein localises to the chromosome. The protein resides in the centromere. It localises to the kinetochore. Its subcellular location is the mitochondrion. It is found in the cytoplasm. The protein localises to the cytoskeleton. The protein resides in the spindle pole. Non-catalytic component of the NSL histone acetyltransferase complex, a multiprotein complex that mediates histone H4 acetylation at 'Lys-5'- and 'Lys-8' (H4K5ac and H4K8ac) at transcription start sites and promotes transcription initiation. The NSL complex also acts as a regulator of gene expression in mitochondria. In addition to its role in transcription, KANSL1 also plays an essential role in spindle assembly during mitosis. Associates with microtubule ends and contributes to microtubule stability. The polypeptide is KAT8 regulatory NSL complex subunit 1 (KANSL1) (Homo sapiens (Human)).